The following is a 488-amino-acid chain: Germacrene A hydroxylase (488 aa).

Residues 7–23 (TSIALATILFFVYKFAT) traverse the membrane as a helical; Signal-anchor for type II membrane protein segment. N-linked (GlcNAc...) asparagine glycosylation is found at Asn-169, Asn-260, Asn-379, and Asn-410. Heme is bound at residue Cys-432.

The protein belongs to the cytochrome P450 family. As to expression, expressed in floral glandular trichomes.

The protein resides in the endoplasmic reticulum membrane. It carries out the reaction (+)-(R)-germacrene A + 3 reduced [NADPH--hemoprotein reductase] + 3 O2 = germacra-1(10),4,11(13)-trien-12-oate + 3 oxidized [NADPH--hemoprotein reductase] + 4 H2O + 4 H(+). The protein operates within secondary metabolite biosynthesis; terpenoid biosynthesis. Involved in the biosynthesis of germacrene-derived sesquiterpene lactones. Component of the parthenolide biosynthetic pathway; parthenolide and conjugates are promising anti-cancer drugs highly active against colon cancer cells. Catalyzes three consecutive oxidations of germacrene A to produce germacrene A acid. This Tanacetum parthenium (Feverfew) protein is Germacrene A hydroxylase.